The sequence spans 517 residues: Amidophosphoribosyltransferase (517 aa).

Met1 is subject to N-acetylmethionine. The propeptide occupies 1 to 11 (MELEESGIREE). Cys12 serves as the catalytic Nucleophile. A Glutamine amidotransferase type-2 domain is found at 12 to 261 (CGVFGCIASG…PGEIVEISRH (250 aa)). A [4Fe-4S] cluster-binding site is contributed by Cys280. Positions 327, 389, and 390 each coordinate Mg(2+). Cys426, Cys503, and Cys506 together coordinate [4Fe-4S] cluster.

It in the C-terminal section; belongs to the purine/pyrimidine phosphoribosyltransferase family. Homotetramer. Mg(2+) is required as a cofactor. [4Fe-4S] cluster serves as cofactor. Expressed at a high level in brain, heart, liver and stomach.

The enzyme catalyses 5-phospho-beta-D-ribosylamine + L-glutamate + diphosphate = 5-phospho-alpha-D-ribose 1-diphosphate + L-glutamine + H2O. It participates in purine metabolism; IMP biosynthesis via de novo pathway; N(1)-(5-phospho-D-ribosyl)glycinamide from 5-phospho-alpha-D-ribose 1-diphosphate: step 1/2. With respect to regulation, activated by the substrate 5-phospho-alpha-D-ribosyl-1-pyrophosphate and inhibited by the purine ribonucleotides, the end products of purine biosynthesis. Catalyzes the formation of phosphoribosylamine from phosphoribosylpyrophosphate (PRPP) and glutamine. In Rattus norvegicus (Rat), this protein is Amidophosphoribosyltransferase (Ppat).